The primary structure comprises 135 residues: Methylglyoxal synthase (135 aa).

In terms of domain architecture, MGS-like spans 1 to 135 (MPKRRRIALI…AQPDPKEIHA (135 aa)). Residues His-12, Lys-16, 38-41 (TGTT), and 58-59 (SG) each bind substrate. The Proton donor/acceptor role is filled by Asp-64. His-91 lines the substrate pocket.

The protein belongs to the methylglyoxal synthase family.

It catalyses the reaction dihydroxyacetone phosphate = methylglyoxal + phosphate. Its function is as follows. Catalyzes the formation of methylglyoxal from dihydroxyacetone phosphate. The polypeptide is Methylglyoxal synthase (Ralstonia nicotianae (strain ATCC BAA-1114 / GMI1000) (Ralstonia solanacearum)).